A 296-amino-acid chain; its full sequence is 4-hydroxybenzoate octaprenyltransferase (296 aa).

8 helical membrane passes run Pro-22 to Gly-42, Trp-46 to Ile-66, Leu-99 to Trp-121, Phe-139 to Tyr-159, Leu-163 to Ala-183, Phe-211 to Gly-231, Pro-238 to Ile-258, and Phe-270 to Val-290.

Belongs to the UbiA prenyltransferase family. The cofactor is Mg(2+).

Its subcellular location is the cell inner membrane. The catalysed reaction is all-trans-octaprenyl diphosphate + 4-hydroxybenzoate = 4-hydroxy-3-(all-trans-octaprenyl)benzoate + diphosphate. It participates in cofactor biosynthesis; ubiquinone biosynthesis. In terms of biological role, catalyzes the prenylation of para-hydroxybenzoate (PHB) with an all-trans polyprenyl group. Mediates the second step in the final reaction sequence of ubiquinone-8 (UQ-8) biosynthesis, which is the condensation of the polyisoprenoid side chain with PHB, generating the first membrane-bound Q intermediate 3-octaprenyl-4-hydroxybenzoate. In Dechloromonas aromatica (strain RCB), this protein is 4-hydroxybenzoate octaprenyltransferase.